The chain runs to 714 residues: Fatty acid oxidation complex subunit alpha (714 aa).

Residues 1–190 (MEMASAFTLN…KLGLVDDVVP (190 aa)) are enoyl-CoA hydratase. Residues 306–714 (APLNSVGILG…FWKTTATDLQ (409 aa)) are 3-hydroxyacyl-CoA dehydrogenase.

The protein in the N-terminal section; belongs to the enoyl-CoA hydratase/isomerase family. It in the central section; belongs to the 3-hydroxyacyl-CoA dehydrogenase family. Heterotetramer of two alpha chains (FadJ) and two beta chains (FadI).

It localises to the cytoplasm. The enzyme catalyses a (3S)-3-hydroxyacyl-CoA = a (2E)-enoyl-CoA + H2O. The catalysed reaction is a 4-saturated-(3S)-3-hydroxyacyl-CoA = a (3E)-enoyl-CoA + H2O. It carries out the reaction a (3S)-3-hydroxyacyl-CoA + NAD(+) = a 3-oxoacyl-CoA + NADH + H(+). It catalyses the reaction (3S)-3-hydroxybutanoyl-CoA = (3R)-3-hydroxybutanoyl-CoA. It functions in the pathway lipid metabolism; fatty acid beta-oxidation. Functionally, catalyzes the formation of a hydroxyacyl-CoA by addition of water on enoyl-CoA. Also exhibits 3-hydroxyacyl-CoA epimerase and 3-hydroxyacyl-CoA dehydrogenase activities. This Escherichia coli O127:H6 (strain E2348/69 / EPEC) protein is Fatty acid oxidation complex subunit alpha.